The chain runs to 255 residues: MRVDLNSDLGESFGRYKLGLDEEVMKYITSANVACGWHAGDPLVMRKTVRLAKENDVQVGAHPGYPDLMGFGRRYMKLTPEEARNYILYQVGALYAFAKAEGLELQHVKPHGALYNAMVKEEDLARAVIEGILDFDKDLILVTLSNSRVADIAEEMGLKVAHEVFADRAYNPDGTLVPRGRPGAVIEDKEEIAERVISMVKDGGIRAINGEWVDLKVDTICVHGDNPKAVEITSYIRKVLEEEGVKIVPMKEFIR.

The protein belongs to the LamB/PxpA family. In terms of assembly, forms a complex composed of PxpA, PxpB and PxpC.

It carries out the reaction 5-oxo-L-proline + ATP + 2 H2O = L-glutamate + ADP + phosphate + H(+). In terms of biological role, catalyzes the cleavage of 5-oxoproline to form L-glutamate coupled to the hydrolysis of ATP to ADP and inorganic phosphate. The chain is 5-oxoprolinase subunit A from Pyrococcus horikoshii (strain ATCC 700860 / DSM 12428 / JCM 9974 / NBRC 100139 / OT-3).